Here is a 311-residue protein sequence, read N- to C-terminus: Methionyl-tRNA formyltransferase (311 aa).

A (6S)-5,6,7,8-tetrahydrofolate-binding site is contributed by 110–113 (SLLP).

The protein belongs to the Fmt family.

It carries out the reaction L-methionyl-tRNA(fMet) + (6R)-10-formyltetrahydrofolate = N-formyl-L-methionyl-tRNA(fMet) + (6S)-5,6,7,8-tetrahydrofolate + H(+). Its function is as follows. Attaches a formyl group to the free amino group of methionyl-tRNA(fMet). The formyl group appears to play a dual role in the initiator identity of N-formylmethionyl-tRNA by promoting its recognition by IF2 and preventing the misappropriation of this tRNA by the elongation apparatus. The polypeptide is Methionyl-tRNA formyltransferase (Streptococcus pneumoniae serotype 19F (strain G54)).